The chain runs to 258 residues: Regulatory protein RecX (258 aa).

The protein belongs to the RecX family.

It is found in the cytoplasm. Modulates RecA activity. The chain is Regulatory protein RecX from Streptococcus pneumoniae (strain 70585).